Reading from the N-terminus, the 206-residue chain is RILP-like protein 2 (206 aa).

The tract at residues 1-29 (MEEPPLREEEEEEEEDEAGPEGALGKSPL) is disordered. The segment covering 8–19 (EEEEEEEEDEAG) has biased composition (acidic residues). The 90-residue stretch at 19 to 108 (GPEGALGKSP…RREGSAAGPE (90 aa)) folds into the RH1 domain. A coiled-coil region spans residues 67-159 (LEMLETLVNE…VQEELQCYKS (93 aa)). The region spanning 125-197 (RPRFTLQELR…KEEKTIIRKL (73 aa)) is the RH2 domain. The interval 161-189 (LIPPREGPGGRREKEALFPRGSNANSNKE) is disordered. The span at 168 to 177 (PGGRREKEAL) shows a compositional bias: basic and acidic residues.

Belongs to the RILPL family. In terms of assembly, homodimer. Interacts with RAC1. Interacts (via N-terminus) with MYO5A, the interaction is required for its role in dendrite formation. Interacts with RAB8A; interaction is dependent on the phosphorylation of RAB8A on 'Thr-72'. Interacts with RAB10 and RAB12; interaction is dependent on the phosphorylation of 'Thr-73' on RAB10 and 'Ser-105' on RAB12.

It is found in the cytoplasm. The protein localises to the cytosol. Its subcellular location is the cytoskeleton. It localises to the microtubule organizing center. The protein resides in the centrosome. It is found in the cell projection. The protein localises to the cilium. Functionally, involved in cell shape and neuronal morphogenesis, positively regulating the establishment and maintenance of dendritic spines. Plays a role in cellular protein transport, including protein transport away from primary cilia. May function via activation of RAC1 and PAK1. The protein is RILP-like protein 2 (RILPL2) of Bos taurus (Bovine).